We begin with the raw amino-acid sequence, 706 residues long: Coiled-coil domain-containing protein 177 (706 aa).

Positions 1-11 (MVDPVPEEEKE) are enriched in acidic residues. Disordered regions lie at residues 1–63 (MVDP…GGRR), 179–262 (ASAL…LREL), and 268–287 (ASARNSCPAGSASSAPNPLG). Low complexity-rich tracts occupy residues 28 to 49 (PPDAQGAQQPAASSASASAAAP) and 179 to 209 (ASALSGGSSSSCSSSSSLPASPASRVARRTS). Residues 210-221 (PSPPARSRPPPA) are compositionally biased toward pro residues. The segment covering 242 to 257 (ALSSESGASSSSYSGE) has biased composition (low complexity). Phosphoserine is present on serine 310. The stretch at 360–624 (AAHGQWEQQR…QTRLEKERAQ (265 aa)) forms a coiled coil. Disordered regions lie at residues 364–386 (QWEQQRVRAEQRREREEREKQRA), 398–425 (VEERRGRRGREEREAARRRQQQCERSEE), 448–580 (DDRL…EREH), and 651–706 (ERSE…LDRK). Residues 368–386 (QRVRAEQRREREEREKQRA) show a composition bias toward basic and acidic residues. Basic and acidic residues-rich tracts occupy residues 448–529 (DDRL…REGL), 548–580 (QEQRARELRERARREELQGRRAKEAAERKEREH), and 651–663 (ERSEQLSRERRSA). The span at 664-674 (LESARSTARAS) shows a compositional bias: low complexity. Positions 676–706 (HVREKVREETNTRSFDRMVREAQLHASLDRK) are enriched in basic and acidic residues.

In Mus musculus (Mouse), this protein is Coiled-coil domain-containing protein 177 (Ccdc177).